The sequence spans 129 residues: ATP synthase epsilon chain (129 aa).

It belongs to the ATPase epsilon chain family. F-type ATPases have 2 components, CF(1) - the catalytic core - and CF(0) - the membrane proton channel. CF(1) has five subunits: alpha(3), beta(3), gamma(1), delta(1), epsilon(1). CF(0) has three main subunits: a, b and c.

The protein localises to the cell inner membrane. In terms of biological role, produces ATP from ADP in the presence of a proton gradient across the membrane. This Campylobacter jejuni subsp. jejuni serotype O:2 (strain ATCC 700819 / NCTC 11168) protein is ATP synthase epsilon chain.